The following is a 196-amino-acid chain: uncharacterized protein (196 aa).

Residues 1-10 (MPGMVPPHVP) show a composition bias toward pro residues. Disordered regions lie at residues 1 to 118 (MPGM…EGSG) and 176 to 196 (TEQA…SAPG). Residues 25–45 (PVAPQVPSPGGAPGQGPYPYS) show a composition bias toward low complexity. Positions 54–69 (LDTSGKNLTEQNSYSN) are enriched in polar residues.

This is an uncharacterized protein from Homo sapiens (Human).